The primary structure comprises 21 residues: Tricyclic peptide MS-271 (21 aa).

A cross-link (3-cysteinyl-aspartic acid (Cys-Asp)) is located at residues 1 to 9; sequence CLGVGSCND. 2 disulfide bridges follow: C1-C13 and C7-C19. W21 carries the post-translational modification D-tryptophan.

In terms of biological role, inhibits chicken myosin light chain kinase with an IC(50) of 8 M. Does not inhibit bovine cAMP-dependent protein kinase or rat protein kinase C. Antibacterial activity against the Gram-positive bacteria B.subtilis, E.faecium and S.aureus. No antibacterial activity against the Gram-negative bacteria E.coli, K.pneumoniae, P.aeruginosa, P.vulgaris, S.sonnei and S.typhosa. No antifungal activity against C.albicans. The sequence is that of Tricyclic peptide MS-271 from Streptomyces sp.